The chain runs to 216 residues: FMN-dependent NADH:quinone oxidoreductase 2 (216 aa).

Residues serine 9, 15–17, 96–99, and 140–143 contribute to the FMN site; these read SVS, MYNF, and SRGG.

It belongs to the azoreductase type 1 family. In terms of assembly, homodimer. It depends on FMN as a cofactor.

The enzyme catalyses 2 a quinone + NADH + H(+) = 2 a 1,4-benzosemiquinone + NAD(+). It catalyses the reaction N,N-dimethyl-1,4-phenylenediamine + anthranilate + 2 NAD(+) = 2-(4-dimethylaminophenyl)diazenylbenzoate + 2 NADH + 2 H(+). Quinone reductase that provides resistance to thiol-specific stress caused by electrophilic quinones. Functionally, also exhibits azoreductase activity. Catalyzes the reductive cleavage of the azo bond in aromatic azo compounds to the corresponding amines. The polypeptide is FMN-dependent NADH:quinone oxidoreductase 2 (Xanthomonas euvesicatoria pv. vesicatoria (strain 85-10) (Xanthomonas campestris pv. vesicatoria)).